The sequence spans 45 residues: Cytochrome b559 subunit beta (45 aa).

The helical transmembrane segment at 20 to 36 (WLAVHTLGVPTVFFLGA) threads the bilayer. H24 contacts heme.

The protein belongs to the PsbE/PsbF family. In terms of assembly, heterodimer of an alpha subunit and a beta subunit. PSII is composed of 1 copy each of membrane proteins PsbA, PsbB, PsbC, PsbD, PsbE, PsbF, PsbH, PsbI, PsbJ, PsbK, PsbL, PsbM, PsbT, PsbX, PsbY, PsbZ, Psb30/Ycf12, peripheral proteins PsbO, CyanoQ (PsbQ), PsbU, PsbV and a large number of cofactors. It forms dimeric complexes. Requires heme b as cofactor.

The protein resides in the cellular thylakoid membrane. In terms of biological role, this b-type cytochrome is tightly associated with the reaction center of photosystem II (PSII). PSII is a light-driven water:plastoquinone oxidoreductase that uses light energy to abstract electrons from H(2)O, generating O(2) and a proton gradient subsequently used for ATP formation. It consists of a core antenna complex that captures photons, and an electron transfer chain that converts photonic excitation into a charge separation. In Nostoc punctiforme (strain ATCC 29133 / PCC 73102), this protein is Cytochrome b559 subunit beta.